Consider the following 383-residue polypeptide: Oxysterol-binding protein-related protein 4B (383 aa).

It belongs to the OSBP family. In terms of tissue distribution, expressed in stems and flowers.

May be involved in the transport of sterols. This chain is Oxysterol-binding protein-related protein 4B (ORP4B), found in Arabidopsis thaliana (Mouse-ear cress).